A 327-amino-acid chain; its full sequence is Zinc transport protein ZntB (327 aa).

The Cytoplasmic portion of the chain corresponds to 1-273 (MEAIKGSDVN…ARRTYTMSLM (273 aa)). A helical transmembrane segment spans residues 274–294 (AMVFLPSTFLTGLFGVNLGGI). Topologically, residues 295–300 (PGGGWQ) are periplasmic. A helical membrane pass occupies residues 301–321 (FGFSIFCILLVVLIGGVALWL). Residues 322 to 327 (YRSKWL) lie on the Cytoplasmic side of the membrane.

This sequence belongs to the CorA metal ion transporter (MIT) (TC 1.A.35) family.

Its subcellular location is the cell inner membrane. The enzyme catalyses Zn(2+)(out) + H(+)(out) = Zn(2+)(in) + H(+)(in). Its function is as follows. Zinc transporter. Acts as a Zn(2+):proton symporter, which likely mediates zinc ion uptake. This Shigella flexneri serotype 5b (strain 8401) protein is Zinc transport protein ZntB.